Consider the following 239-residue polypeptide: Probable transcriptional regulatory protein Ajs_1898 (239 aa).

A disordered region spans residues Met1–Arg21.

This sequence belongs to the TACO1 family.

Its subcellular location is the cytoplasm. This Acidovorax sp. (strain JS42) protein is Probable transcriptional regulatory protein Ajs_1898.